A 1279-amino-acid polypeptide reads, in one-letter code: Photoreceptor cilium actin regulator (1279 aa).

Gly-2 carries N-myristoyl glycine lipidation. Cys-3 is lipidated: S-palmitoyl cysteine. Disordered stretches follow at residues 101 to 168, 380 to 598, 802 to 821, 860 to 1107, and 1127 to 1279; these read NKPQ…KGRV, AAQV…SHVE, EVSE…ENLP, ASHP…TTAK, and KSSS…KEIS. Residues 126-168 show a composition bias toward basic and acidic residues; sequence FSGKESKENTPQETSKGNRESVCHQPDSQDHCRQSATESKGRV. The segment covering 477-491 has biased composition (acidic residues); that stretch reads SEEEDCSPEEEDELS. Composition is skewed to basic and acidic residues over residues 535-547 and 580-598; these read LKMK…RIKF and GPER…SHVE. Residues 804-818 show a composition bias toward acidic residues; that stretch reads SESEDISGDVEEDLE. Composition is skewed to polar residues over residues 886-901, 913-925, and 955-965; these read GSGS…SGST, DLNS…PSSE, and TNPTPGQSRTL. Residues 972–990 show a composition bias toward basic and acidic residues; sequence FSRDPHSSEASRKGPERSL. Residues 1047 to 1062 are compositionally biased toward polar residues; it reads RKTTSPPCQHPQSNPA. Over residues 1076–1090 the composition is skewed to low complexity; that stretch reads PSSASCSSPSVSPSR. The span at 1091 to 1100 shows a compositional bias: basic and acidic residues; the sequence is GSKDSIHSED. Positions 1226–1241 are enriched in polar residues; it reads WNNSRVPELQGSSTKR. Basic and acidic residues predominate over residues 1259–1279; the sequence is RMNRGQDRPQPESQPQHKEIS.

Specifically expressed in retina.

It localises to the cell projection. The protein localises to the cilium. Its subcellular location is the photoreceptor outer segment. The protein resides in the photoreceptor inner segment. Its function is as follows. Plays an essential role for normal photoreceptor cell maintenance and vision. This Mus musculus (Mouse) protein is Photoreceptor cilium actin regulator.